The primary structure comprises 66 residues: Large ribosomal subunit protein bL35 (66 aa).

Residues 1 to 26 (MPKMKTHRGSAKRFKKTGSGKLKRSH) show a composition bias toward basic residues. The disordered stretch occupies residues 1–45 (MPKMKTHRGSAKRFKKTGSGKLKRSHAYTSHLFANKSQKQKRKLR).

This sequence belongs to the bacterial ribosomal protein bL35 family.

The sequence is that of Large ribosomal subunit protein bL35 from Bacillus velezensis (strain DSM 23117 / BGSC 10A6 / LMG 26770 / FZB42) (Bacillus amyloliquefaciens subsp. plantarum).